The chain runs to 492 residues: Bifunctional protein GlmU (492 aa).

The tract at residues 1 to 241 (MTFRGDTAVL…NALVAGVNNR (241 aa)) is pyrophosphorylase. Residues 12-15 (LAAG), K26, Q83, 88-89 (GT), 112-114 (SGD), G151, E166, N181, and N239 each bind UDP-N-acetyl-alpha-D-glucosamine. D114 provides a ligand contact to Mg(2+). Residue N239 participates in Mg(2+) binding. Positions 242–262 (VQLAELSAELNRRIVATHQVA) are linker. The N-acetyltransferase stretch occupies residues 263–492 (GVTIIDPATT…KQSQQKSEPD (230 aa)). Positions 344 and 362 each coordinate UDP-N-acetyl-alpha-D-glucosamine. The active-site Proton acceptor is H374. Positions 377 and 388 each coordinate UDP-N-acetyl-alpha-D-glucosamine. Residues A391, 397-398 (NY), S416, and A434 contribute to the acetyl-CoA site. The tract at residues 461-492 (VQRKRPGSAAAQAAEKASTRTGKQSQQKSEPD) is disordered. The span at 479-492 (TRTGKQSQQKSEPD) shows a compositional bias: polar residues.

In the N-terminal section; belongs to the N-acetylglucosamine-1-phosphate uridyltransferase family. This sequence in the C-terminal section; belongs to the transferase hexapeptide repeat family. Homotrimer. Mg(2+) serves as cofactor.

It localises to the cytoplasm. It carries out the reaction alpha-D-glucosamine 1-phosphate + acetyl-CoA = N-acetyl-alpha-D-glucosamine 1-phosphate + CoA + H(+). It catalyses the reaction N-acetyl-alpha-D-glucosamine 1-phosphate + UTP + H(+) = UDP-N-acetyl-alpha-D-glucosamine + diphosphate. It participates in nucleotide-sugar biosynthesis; UDP-N-acetyl-alpha-D-glucosamine biosynthesis; N-acetyl-alpha-D-glucosamine 1-phosphate from alpha-D-glucosamine 6-phosphate (route II): step 2/2. Its pathway is nucleotide-sugar biosynthesis; UDP-N-acetyl-alpha-D-glucosamine biosynthesis; UDP-N-acetyl-alpha-D-glucosamine from N-acetyl-alpha-D-glucosamine 1-phosphate: step 1/1. The protein operates within bacterial outer membrane biogenesis; LPS lipid A biosynthesis. In terms of biological role, catalyzes the last two sequential reactions in the de novo biosynthetic pathway for UDP-N-acetylglucosamine (UDP-GlcNAc). The C-terminal domain catalyzes the transfer of acetyl group from acetyl coenzyme A to glucosamine-1-phosphate (GlcN-1-P) to produce N-acetylglucosamine-1-phosphate (GlcNAc-1-P), which is converted into UDP-GlcNAc by the transfer of uridine 5-monophosphate (from uridine 5-triphosphate), a reaction catalyzed by the N-terminal domain. The chain is Bifunctional protein GlmU from Mycobacterium leprae (strain Br4923).